A 426-amino-acid polypeptide reads, in one-letter code: Molybdopterin molybdenumtransferase 1 (426 aa).

The protein belongs to the MoeA family. It depends on Mg(2+) as a cofactor.

It carries out the reaction adenylyl-molybdopterin + molybdate = Mo-molybdopterin + AMP + H(+). It participates in cofactor biosynthesis; molybdopterin biosynthesis. Its function is as follows. Catalyzes the insertion of molybdate into adenylated molybdopterin with the concomitant release of AMP. This is Molybdopterin molybdenumtransferase 1 (moeA1) from Mycobacterium tuberculosis (strain ATCC 25618 / H37Rv).